Consider the following 186-residue polypeptide: Bis(5'-nucleosyl)-tetraphosphatase, symmetrical (186 aa).

Residues 18 to 132 (RYIHTVGVMN…IYVADYIEPN (115 aa)) enclose the HD domain. His-21 contacts ADP. Residues His-21, His-50, and Asp-51 each coordinate Fe cation. ADP-binding positions include 51-54 (DYAK), His-83, 109-110 (HT), Asp-127, Arg-133, and 170-175 (PVFPDT). Residue Asp-127 participates in Fe cation binding.

This sequence belongs to the Ap4A hydrolase YqeK family. As to quaternary structure, homodimer.

It catalyses the reaction P(1),P(4)-bis(5'-adenosyl) tetraphosphate + H2O = 2 ADP + 2 H(+). Its function is as follows. Hydrolyzes diadenosine 5',5'''-P1,P4-tetraphosphate (Ap4A) to yield ADP. The chain is Bis(5'-nucleosyl)-tetraphosphatase, symmetrical (yqeK) from Bacillus subtilis (strain 168).